The chain runs to 712 residues: Ribosome-releasing factor 2, mitochondrial (712 aa).

A mitochondrion-targeting transit peptide spans 1–29; the sequence is MLRCAWQNGPRQSNRWLRHLSNQIWKRSY. Positions 31–310 constitute a tr-type G domain; the sequence is SKIRNIGILA…AVNSYLPAPE (280 aa). Residues 40–47, 104–108, and 158–161 each bind GTP; these read AHIDAGKT, DTPGH, and NKMD.

The protein belongs to the TRAFAC class translation factor GTPase superfamily. Classic translation factor GTPase family. EF-G/EF-2 subfamily.

The protein localises to the mitochondrion. Its function is as follows. Mitochondrial GTPase that mediates the disassembly of ribosomes from messenger RNA at the termination of mitochondrial protein biosynthesis. Not involved in the GTP-dependent ribosomal translocation step during translation elongation. The polypeptide is Ribosome-releasing factor 2, mitochondrial (Drosophila yakuba (Fruit fly)).